Consider the following 361-residue polypeptide: UDP-3-O-acylglucosamine N-acyltransferase (361 aa).

H264 functions as the Proton acceptor in the catalytic mechanism.

Belongs to the transferase hexapeptide repeat family. LpxD subfamily. As to quaternary structure, homotrimer.

It carries out the reaction a UDP-3-O-[(3R)-3-hydroxyacyl]-alpha-D-glucosamine + a (3R)-hydroxyacyl-[ACP] = a UDP-2-N,3-O-bis[(3R)-3-hydroxyacyl]-alpha-D-glucosamine + holo-[ACP] + H(+). The protein operates within bacterial outer membrane biogenesis; LPS lipid A biosynthesis. Functionally, catalyzes the N-acylation of UDP-3-O-acylglucosamine using 3-hydroxyacyl-ACP as the acyl donor. Is involved in the biosynthesis of lipid A, a phosphorylated glycolipid that anchors the lipopolysaccharide to the outer membrane of the cell. In Bordetella avium (strain 197N), this protein is UDP-3-O-acylglucosamine N-acyltransferase.